The following is a 203-amino-acid chain: MSSKEQNVHEEQVSKEKEGMESVMNESQEQVKSEDAQAEFDAQAELVQALARVDELEKQLQQSQKTEREAMIRAQAEIENIRRRTQQDVEKAHKFALEKFSNELLPVLDNLERALSAADHENEQMQPMIEGLELTLKSFLDAVRKFGIEVVEEKNVAFNPEVHQAMTLIDSPEHEANHVVDVMQKGYTLNGRLLRPAMVVVSK.

Positions 1–20 (MSSKEQNVHEEQVSKEKEGM) are enriched in basic and acidic residues. The tract at residues 1 to 38 (MSSKEQNVHEEQVSKEKEGMESVMNESQEQVKSEDAQA) is disordered.

It belongs to the GrpE family. In terms of assembly, homodimer.

It is found in the cytoplasm. Participates actively in the response to hyperosmotic and heat shock by preventing the aggregation of stress-denatured proteins, in association with DnaK and GrpE. It is the nucleotide exchange factor for DnaK and may function as a thermosensor. Unfolded proteins bind initially to DnaJ; upon interaction with the DnaJ-bound protein, DnaK hydrolyzes its bound ATP, resulting in the formation of a stable complex. GrpE releases ADP from DnaK; ATP binding to DnaK triggers the release of the substrate protein, thus completing the reaction cycle. Several rounds of ATP-dependent interactions between DnaJ, DnaK and GrpE are required for fully efficient folding. The chain is Protein GrpE from Proteus mirabilis (strain HI4320).